A 729-amino-acid chain; its full sequence is Fatty acid oxidation complex subunit alpha (729 aa).

The enoyl-CoA hydratase/isomerase stretch occupies residues 1-189 (MLYKGDTLYL…KIGLVDGVVK (189 aa)). Asp-296 provides a ligand contact to substrate. The interval 311-729 (ETPKQAAVLG…ARPVGDLKTA (419 aa)) is 3-hydroxyacyl-CoA dehydrogenase. NAD(+) contacts are provided by residues Met-324, Asp-343, 400–402 (VVE), Lys-407, and Ser-429. The active-site For 3-hydroxyacyl-CoA dehydrogenase activity is His-450. Residue Asn-453 coordinates NAD(+). 2 residues coordinate substrate: Asn-500 and Tyr-660. Residues 708–729 (RHNEPYYPPVEPARPVGDLKTA) are disordered.

It in the N-terminal section; belongs to the enoyl-CoA hydratase/isomerase family. The protein in the C-terminal section; belongs to the 3-hydroxyacyl-CoA dehydrogenase family. Heterotetramer of two alpha chains (FadB) and two beta chains (FadA).

It catalyses the reaction a (3S)-3-hydroxyacyl-CoA + NAD(+) = a 3-oxoacyl-CoA + NADH + H(+). The catalysed reaction is a (3S)-3-hydroxyacyl-CoA = a (2E)-enoyl-CoA + H2O. The enzyme catalyses a 4-saturated-(3S)-3-hydroxyacyl-CoA = a (3E)-enoyl-CoA + H2O. It carries out the reaction (3S)-3-hydroxybutanoyl-CoA = (3R)-3-hydroxybutanoyl-CoA. It catalyses the reaction a (3Z)-enoyl-CoA = a 4-saturated (2E)-enoyl-CoA. The catalysed reaction is a (3E)-enoyl-CoA = a 4-saturated (2E)-enoyl-CoA. The protein operates within lipid metabolism; fatty acid beta-oxidation. Functionally, involved in the aerobic and anaerobic degradation of long-chain fatty acids via beta-oxidation cycle. Catalyzes the formation of 3-oxoacyl-CoA from enoyl-CoA via L-3-hydroxyacyl-CoA. It can also use D-3-hydroxyacyl-CoA and cis-3-enoyl-CoA as substrate. The polypeptide is Fatty acid oxidation complex subunit alpha (Escherichia coli O6:H1 (strain CFT073 / ATCC 700928 / UPEC)).